A 478-amino-acid chain; its full sequence is GDP-fucose protein O-fucosyltransferase 3 (478 aa).

At 1 to 8 the chain is on the cytoplasmic side; the sequence is MVWIQRRR. The helical; Signal-anchor for type II membrane protein transmembrane segment at 9 to 31 threads the bilayer; sequence LLASCLCITATVFLLVTLQVVVE. Residues 32–478 are Lumenal-facing; that stretch reads LGKFERKKFK…QEFWALVFKD (447 aa). N-linked (GlcNAc...) asparagine glycosylation is found at Asn-110 and Asn-168. A disulfide bond links Cys-389 and Cys-392.

It belongs to the glycosyltransferase 10 family.

It is found in the endoplasmic reticulum membrane. The catalysed reaction is L-threonyl-[protein] + GDP-beta-L-fucose = 3-O-(alpha-L-fucosyl)-L-threonyl-[protein] + GDP + H(+). It carries out the reaction L-seryl-[protein] + GDP-beta-L-fucose = 3-O-(alpha-L-fucosyl)-L-seryl-[protein] + GDP + H(+). It participates in protein modification; protein glycosylation. Its function is as follows. Protein O-fucosyltransferase that specifically catalyzes O-fucosylation of serine or threonine residues in EMI domains of target proteins, such as MMRN1, MMRN2 and EMID1. Attaches fucose through an O-glycosidic linkage. O-fucosylation of EMI domain-containing proteins may be required for facilitating protein folding and secretion. May also show alpha-(1,3)-fucosyltransferase activity toward the innermost N-acetyl glucosamine (GlcNAc) residue in biantennary N-glycan acceptors. However, this was tested with a library of synthetic substrates and this activity is unsure in vivo. May be involved in biosynthesis of Lewis X-carrying biantennary N-glycans that regulate neuron stem cell self-renewal during brain development. This is GDP-fucose protein O-fucosyltransferase 3 (FUT10) from Canis lupus familiaris (Dog).